The sequence spans 132 residues: EF-hand calcium-binding domain-containing protein 10 (132 aa).

EF-hand domains follow at residues 64–99 (MDNS…LGLC) and 120–132 (EMNK…WSMF).

The chain is EF-hand calcium-binding domain-containing protein 10 (Efcab10) from Mus musculus (Mouse).